We begin with the raw amino-acid sequence, 295 residues long: Thioredoxin-related transmembrane protein 2 (295 aa).

Residues 1–48 (MAVLAPLIALVYSVPRLSRWLARPYCLLSALLSIAFLLVRKLPPICNG) form the signal peptide. Topologically, residues 49–102 (LPTQREDGNPCDFDWREVEILMFLSAIVMMKNRRSITVEQHVGNIFMFSKVANA) are extracellular. A helical membrane pass occupies residues 103–125 (ILFFRLDIRMGLLYLTLCIVFLM). In terms of domain architecture, Thioredoxin spans 114-269 (LLYLTLCIVF…LYQRAKKLSK (156 aa)). Residues 126–295 (TCKPPLYMGP…VPDGENKKDK (170 aa)) lie on the Cytoplasmic side of the membrane. S211 and S243 each carry phosphoserine. The disordered stretch occupies residues 266–295 (KLSKGGDMSEEKPGNPTPTAVPDGENKKDK). The Di-lysine motif motif lies at 292 to 295 (KKDK).

In terms of assembly, monomer. Homodimer; disulfide-linked. Occurs in both reduced and oxidized monomeric form. Oxidative conditions increase homodimerization. Interacts with CANX. Interacts with ATP2A2.

It localises to the endoplasmic reticulum membrane. It is found in the mitochondrion membrane. Functionally, endoplasmic reticulum and mitochondria-associated protein that probably functions as a regulator of cellular redox state and thereby regulates protein post-translational modification, protein folding and mitochondrial activity. Indirectly regulates neuronal proliferation, migration, and organization in the developing brain. This is Thioredoxin-related transmembrane protein 2 (Tmx2) from Rattus norvegicus (Rat).